A 25-amino-acid chain; its full sequence is Cytochrome c oxidase subunit 1 (25 aa).

It belongs to the heme-copper respiratory oxidase family. It depends on Cu(2+) as a cofactor. Heme serves as cofactor.

Its subcellular location is the cell inner membrane. It catalyses the reaction 4 Fe(II)-[cytochrome c] + O2 + 8 H(+)(in) = 4 Fe(III)-[cytochrome c] + 2 H2O + 4 H(+)(out). It functions in the pathway energy metabolism; oxidative phosphorylation. Subunit I and II form the functional core of the enzyme complex. Electrons originating in cytochrome c are transferred via heme a and Cu(A) to the binuclear center formed by heme a3 and Cu(B). This cytochrome c oxidase shows proton pump activity across the membrane in addition to the electron transfer. This Paracoccus versutus (Thiobacillus versutus) protein is Cytochrome c oxidase subunit 1 (ctaD).